A 251-amino-acid polypeptide reads, in one-letter code: 5'-nucleotidase SurE (251 aa).

A divalent metal cation contacts are provided by Asp-8, Asp-9, Ser-39, and Asn-91.

It belongs to the SurE nucleotidase family. A divalent metal cation serves as cofactor.

It localises to the cytoplasm. It carries out the reaction a ribonucleoside 5'-phosphate + H2O = a ribonucleoside + phosphate. In terms of biological role, nucleotidase that shows phosphatase activity on nucleoside 5'-monophosphates. This chain is 5'-nucleotidase SurE, found in Nitrosococcus oceani (strain ATCC 19707 / BCRC 17464 / JCM 30415 / NCIMB 11848 / C-107).